Reading from the N-terminus, the 642-residue chain is Threonine--tRNA ligase (642 aa).

The TGS domain occupies 1–58 (MQVAGKELEVQQGALCGEVLKEALSKKQFKNVVVAKCGDTLLDLTTTVPADCTDLEPV). The tract at residues 239-530 (DHRKLGTQLD…LLEHTGGALP (292 aa)) is catalytic. 3 residues coordinate Zn(2+): cysteine 331, histidine 382, and histidine 507.

It belongs to the class-II aminoacyl-tRNA synthetase family. In terms of assembly, homodimer. The cofactor is Zn(2+).

The protein localises to the cytoplasm. It carries out the reaction tRNA(Thr) + L-threonine + ATP = L-threonyl-tRNA(Thr) + AMP + diphosphate + H(+). Catalyzes the attachment of threonine to tRNA(Thr) in a two-step reaction: L-threonine is first activated by ATP to form Thr-AMP and then transferred to the acceptor end of tRNA(Thr). Also edits incorrectly charged L-seryl-tRNA(Thr). The sequence is that of Threonine--tRNA ligase from Maridesulfovibrio salexigens (strain ATCC 14822 / DSM 2638 / NCIMB 8403 / VKM B-1763) (Desulfovibrio salexigens).